A 197-amino-acid chain; its full sequence is FMN-dependent NADH:quinone oxidoreductase (197 aa).

FMN is bound at residue Ser10.

The protein belongs to the azoreductase type 1 family. As to quaternary structure, homodimer. FMN serves as cofactor.

The catalysed reaction is 2 a quinone + NADH + H(+) = 2 a 1,4-benzosemiquinone + NAD(+). It carries out the reaction N,N-dimethyl-1,4-phenylenediamine + anthranilate + 2 NAD(+) = 2-(4-dimethylaminophenyl)diazenylbenzoate + 2 NADH + 2 H(+). Quinone reductase that provides resistance to thiol-specific stress caused by electrophilic quinones. Its function is as follows. Also exhibits azoreductase activity. Catalyzes the reductive cleavage of the azo bond in aromatic azo compounds to the corresponding amines. This is FMN-dependent NADH:quinone oxidoreductase from Mycoplasma pneumoniae (strain ATCC 29342 / M129 / Subtype 1) (Mycoplasmoides pneumoniae).